The following is a 198-amino-acid chain: Zinc finger protein 41 (198 aa).

The segment covering 1–12 has biased composition (basic residues); the sequence is MEKPATRKKKSQ. Positions 1-56 are disordered; it reads MEKPATRKKKSQAPKEEAGAQKATVKGEKTSKGKKATKKPRKPRRPRKEPVLSPED. The segment covering 13–31 has biased composition (basic and acidic residues); the sequence is APKEEAGAQKATVKGEKTS. Over residues 32 to 47 the composition is skewed to basic residues; the sequence is KGKKATKKPRKPRRPR. 4 consecutive C2H2-type zinc fingers follow at residues 87–109, 115–137, 143–165, and 171–193; these read YECG…QRVH, FKCD…QRIH, FKCG…QKTH, and YGCE…RKRH.

The protein belongs to the krueppel C2H2-type zinc-finger protein family. Predominantly in the spermatocytes and spermatids of testes. It is also expressed in the fetus and embryonic stem cells at lower levels.

It localises to the nucleus. Functionally, a putative DNA-binding regulatory protein associated with meiosis in spermatogenesis. This is Zinc finger protein 41 (Zfp41) from Mus musculus (Mouse).